A 1564-amino-acid polypeptide reads, in one-letter code: Nucleoporin nup184 (1564 aa).

The protein localises to the nucleus. It localises to the nuclear pore complex. Functionally, interacts with pom152 in the core structure of the nuclear pore complex (NPC). Involved in the export of mRNA. The polypeptide is Nucleoporin nup184 (nup184) (Schizosaccharomyces pombe (strain 972 / ATCC 24843) (Fission yeast)).